The following is a 295-amino-acid chain: Bifunctional protein FolD (295 aa).

NADP(+) is bound by residues 166-168, S191, and I232; that span reads GRS.

Belongs to the tetrahydrofolate dehydrogenase/cyclohydrolase family. In terms of assembly, homodimer.

It carries out the reaction (6R)-5,10-methylene-5,6,7,8-tetrahydrofolate + NADP(+) = (6R)-5,10-methenyltetrahydrofolate + NADPH. The enzyme catalyses (6R)-5,10-methenyltetrahydrofolate + H2O = (6R)-10-formyltetrahydrofolate + H(+). The protein operates within one-carbon metabolism; tetrahydrofolate interconversion. Its function is as follows. Catalyzes the oxidation of 5,10-methylenetetrahydrofolate to 5,10-methenyltetrahydrofolate and then the hydrolysis of 5,10-methenyltetrahydrofolate to 10-formyltetrahydrofolate. This chain is Bifunctional protein FolD, found in Wolbachia sp. subsp. Brugia malayi (strain TRS).